The primary structure comprises 95 residues: Protein RL5A (95 aa).

This Homo sapiens (Human) protein is Protein RL5A (RL5A).